The chain runs to 311 residues: MPRTADDSWDIATSVGATAVMVALARAAETASETPLIRDQFAEPLVSTPELAAVREQVAAWWAQTDDDDDPDFTVDSQQMTDYLAVRTHFFDSYFIDAVAAGIRQVVILAAGLDSRAYRLDWPGGTTVYEIDLPKVLDYKEHTLARHGAAPVAALRAVPVDLRHDWPQALRDAGFQTSLPTAWLAEGLLPFLPAAAQHALFTAIDANSATGSRVAVEMFGVDEDARRAAEERAQRWARQRAKRQARGQDTSFDPFDLWFDDEGQPDPADWFAAHGWTTDSVQAGAEALRLGRTAHSQEGPFVNRFVTAGKP.

Residues Asp-132 and 161–162 (DL) each bind S-adenosyl-L-methionine.

This sequence belongs to the UPF0677 family.

Exhibits S-adenosyl-L-methionine-dependent methyltransferase activity. This chain is Putative S-adenosyl-L-methionine-dependent methyltransferase MMAR_0358, found in Mycobacterium marinum (strain ATCC BAA-535 / M).